Reading from the N-terminus, the 600-residue chain is Elongation factor 4 (600 aa).

One can recognise a tr-type G domain in the interval 6-188 (QFIRNFSIIA…QITKQIPSPK (183 aa)). Residues 18 to 23 (DHGKST) and 135 to 138 (NKID) each bind GTP.

This sequence belongs to the TRAFAC class translation factor GTPase superfamily. Classic translation factor GTPase family. LepA subfamily.

The protein localises to the cell inner membrane. The enzyme catalyses GTP + H2O = GDP + phosphate + H(+). Required for accurate and efficient protein synthesis under certain stress conditions. May act as a fidelity factor of the translation reaction, by catalyzing a one-codon backward translocation of tRNAs on improperly translocated ribosomes. Back-translocation proceeds from a post-translocation (POST) complex to a pre-translocation (PRE) complex, thus giving elongation factor G a second chance to translocate the tRNAs correctly. Binds to ribosomes in a GTP-dependent manner. The sequence is that of Elongation factor 4 from Leptospira interrogans serogroup Icterohaemorrhagiae serovar copenhageni (strain Fiocruz L1-130).